Consider the following 183-residue polypeptide: MTTYKCIEKGIVVWLTGLPGSGKTTIATRLADLLQKEGYRVEVLDGDWARTTVSEGAGFTREERLRHLKRIAWIARLLARNGVIVICSFVSPYKQARNMVRRIVEEEGIPFLEIYVKASLEEVIRRDPKGLYKKALKGELENFTGITDPYEPPENPQLVLDTESNTIEHNVSYLYSLVKAVIE.

Position 17-24 (17-24 (GLPGSGKT)) interacts with ATP. The Phosphoserine intermediate role is filled by serine 91.

The protein belongs to the APS kinase family.

The catalysed reaction is adenosine 5'-phosphosulfate + ATP = 3'-phosphoadenylyl sulfate + ADP + H(+). It participates in sulfur metabolism; hydrogen sulfide biosynthesis; sulfite from sulfate: step 2/3. In terms of biological role, catalyzes the synthesis of activated sulfate. This is Probable adenylyl-sulfate kinase (cysC) from Aeropyrum pernix (strain ATCC 700893 / DSM 11879 / JCM 9820 / NBRC 100138 / K1).